The sequence spans 556 residues: Formate--tetrahydrofolate ligase (556 aa).

65–72 contributes to the ATP binding site; the sequence is TPAGEGKT.

This sequence belongs to the formate--tetrahydrofolate ligase family.

It catalyses the reaction (6S)-5,6,7,8-tetrahydrofolate + formate + ATP = (6R)-10-formyltetrahydrofolate + ADP + phosphate. It functions in the pathway one-carbon metabolism; tetrahydrofolate interconversion. The sequence is that of Formate--tetrahydrofolate ligase from Peptoclostridium acidaminophilum (Eubacterium acidaminophilum).